A 399-amino-acid polypeptide reads, in one-letter code: MHTWALLLAAGQSSRIAAACPGVRKQFLLWQNAPLFWHSAVMLSRVSRMRGIIFVFPEDMLEEATAMVRELDAGRALGIPWKAVSGGARRQDSVASGLGQLPAECDTVLVHDAARPFASASLTNSILDALQAGAEGVVPALAVTDTIKVVEDGAVLSTPDRTKLVAVQTPQGFSLQALLGAHRHCAEKALAVTDDASMLELLGQHTVITVEGEASNIKVTHPEDLTMLHSSEKKNMQVPCVGWGYDVHRFGSDGRPMKLGGVPIAGGPGVIAHSDGDVLLHALTDAVLGCMGLGDIGMLFPDTDAAYDNADSAVMLNEVLEKARNAGLLITHVDLTIITQIPRITPWRDQIHKNICRITRLDASSVNLKATTEEKLGFTGEKKGIKAVAAVTALRRVSS.

The segment at Met1–Pro239 is 2-C-methyl-D-erythritol 4-phosphate cytidylyltransferase. The interval Cys240–Ser399 is 2-C-methyl-D-erythritol 2,4-cyclodiphosphate synthase. The a divalent metal cation site is built by Asp246 and His248. 4-CDP-2-C-methyl-D-erythritol 2-phosphate-binding positions include Asp246–His248 and His273–Ser274. A divalent metal cation is bound at residue His281. Residues Asp295 to Gly297, Phe300 to Asp304, Thr371 to Glu374, and Phe378 each bind 4-CDP-2-C-methyl-D-erythritol 2-phosphate.

The protein in the N-terminal section; belongs to the IspD/TarI cytidylyltransferase family. IspD subfamily. It in the C-terminal section; belongs to the IspF family. The cofactor is a divalent metal cation.

It catalyses the reaction 2-C-methyl-D-erythritol 4-phosphate + CTP + H(+) = 4-CDP-2-C-methyl-D-erythritol + diphosphate. It carries out the reaction 4-CDP-2-C-methyl-D-erythritol 2-phosphate = 2-C-methyl-D-erythritol 2,4-cyclic diphosphate + CMP. The protein operates within isoprenoid biosynthesis; isopentenyl diphosphate biosynthesis via DXP pathway; isopentenyl diphosphate from 1-deoxy-D-xylulose 5-phosphate: step 2/6. It functions in the pathway isoprenoid biosynthesis; isopentenyl diphosphate biosynthesis via DXP pathway; isopentenyl diphosphate from 1-deoxy-D-xylulose 5-phosphate: step 4/6. Bifunctional enzyme that catalyzes the formation of 4-diphosphocytidyl-2-C-methyl-D-erythritol from CTP and 2-C-methyl-D-erythritol 4-phosphate (MEP) (IspD), and catalyzes the conversion of 4-diphosphocytidyl-2-C-methyl-D-erythritol 2-phosphate (CDP-ME2P) to 2-C-methyl-D-erythritol 2,4-cyclodiphosphate (ME-CPP) with a corresponding release of cytidine 5-monophosphate (CMP) (IspF). The chain is Bifunctional enzyme IspD/IspF from Oleidesulfovibrio alaskensis (strain ATCC BAA-1058 / DSM 17464 / G20) (Desulfovibrio alaskensis).